A 407-amino-acid polypeptide reads, in one-letter code: SERPINE1 mRNA-binding protein 1 (407 aa).

Phosphoserine is present on Ser-25. The interval 33–227 (AAENKKKEAG…GSGSHNWGTV (195 aa)) is disordered. Residues 51–68 (AKSAAQAAAQTNSNAAGK) are compositionally biased toward low complexity. Lys-52 bears the N6-acetyllysine; alternate mark. Lys-52 participates in a covalent cross-link: Glycyl lysine isopeptide (Lys-Gly) (interchain with G-Cter in SUMO1); alternate. The residue at position 68 (Lys-68) is an N6-acetyllysine. Composition is skewed to basic and acidic residues over residues 70 to 80 (LRKESQKDRKN), 89 to 114 (VDKK…RRPD), and 122 to 162 (KIID…DRPI). Lys-102 participates in a covalent cross-link: Glycyl lysine isopeptide (Lys-Gly) (interchain with G-Cter in SUMO1); alternate. Lys-102 participates in a covalent cross-link: Glycyl lysine isopeptide (Lys-Gly) (interchain with G-Cter in SUMO2). Lys-102 is covalently cross-linked (Glycyl lysine isopeptide (Lys-Gly) (interchain with G-Cter in SUMO2); alternate). Residues Lys-122 and Lys-140 each carry the N6-acetyllysine modification. The segment covering 164 to 182 (GRGGLGRGRGGRGRGMGRG) has biased composition (gly residues). Arg-165 and Arg-188 each carry omega-N-methylarginine. The span at 183–199 (DGFDSRGKREFDRHSGS) shows a compositional bias: basic and acidic residues. Phosphoserine is present on residues Ser-197, Ser-199, Ser-203, Ser-205, and Ser-208. An N6-acetyllysine; alternate modification is found at Lys-211. Lys-211 participates in a covalent cross-link: Glycyl lysine isopeptide (Lys-Gly) (interchain with G-Cter in SUMO2); alternate. Arg-216 is subject to Omega-N-methylarginine. Position 221 is a phosphoserine (Ser-221). Position 226 is a phosphothreonine (Thr-226). A Glycyl lysine isopeptide (Lys-Gly) (interchain with G-Cter in SUMO1); alternate cross-link involves residue Lys-228. Lys-228 is covalently cross-linked (Glycyl lysine isopeptide (Lys-Gly) (interchain with G-Cter in SUMO2); alternate). A Phosphoserine modification is found at Ser-234. Polar residues predominate over residues 242-256 (ISYNCSDLDQSNVTE). Disordered stretches follow at residues 242 to 291 (ISYN…TLDE) and 327 to 407 (SKSE…PALA). Residues 261 to 274 (GEEHPVADTENKEN) are compositionally biased toward basic and acidic residues. A Glycyl lysine isopeptide (Lys-Gly) (interchain with G-Cter in SUMO1); alternate cross-link involves residue Lys-280. A Glycyl lysine isopeptide (Lys-Gly) (interchain with G-Cter in SUMO2) cross-link involves residue Lys-280. Residue Lys-280 forms a Glycyl lysine isopeptide (Lys-Gly) (interchain with G-Cter in SUMO2); alternate linkage. Basic and acidic residues-rich tracts occupy residues 281-291 (EEGPKEMTLDE) and 327-341 (SKSE…VMDH). Position 328 is an N6-acetyllysine (Lys-328). Ser-329 carries the post-translational modification Phosphoserine. A compositionally biased stretch (gly residues) spans 362-371 (GRPGRGGRGG). Omega-N-methylarginine is present on residues Arg-363, Arg-366, and Arg-369. Phosphoserine is present on residues Ser-391 and Ser-393.

The protein belongs to the SERBP1-HABP4 family. In terms of assembly, associates with mature 80S ribosomes. Interacts with EEF2/eEF2; interaction sequesters EEF2/eEF2 at the A-site of the ribosome, thereby blocking the interaction sites of the mRNA-tRNA complex, promoting ribosome stabilization and hibernation. Interacts with SPIN1. Interacts with CHD3 and TDRD3. Interacts with ZDHHC17 (via ANK repeats). Phosphorylation by MTOR inhibits SERBP1 and relieves ribosome hibernation.

In terms of biological role, ribosome-binding protein that promotes ribosome hibernation, a process during which ribosomes are stabilized in an inactive state and preserved from proteasomal degradation. Acts via its association with EEF2/eEF2 factor, sequestering EEF2/eEF2 at the A-site of the ribosome and promoting ribosome stabilization and storage in an inactive state. May also play a role in the regulation of mRNA stability: binds to the 3'-most 134 nt of the SERPINE1/PAI1 mRNA, a region which confers cyclic nucleotide regulation of message decay. Seems to play a role in PML-nuclear bodies formation. This chain is SERPINE1 mRNA-binding protein 1, found in Oryctolagus cuniculus (Rabbit).